The following is a 280-amino-acid chain: 2-dehydro-3-deoxyphosphooctonate aldolase (280 aa).

The protein belongs to the KdsA family.

The protein localises to the cytoplasm. It catalyses the reaction D-arabinose 5-phosphate + phosphoenolpyruvate + H2O = 3-deoxy-alpha-D-manno-2-octulosonate-8-phosphate + phosphate. It functions in the pathway carbohydrate biosynthesis; 3-deoxy-D-manno-octulosonate biosynthesis; 3-deoxy-D-manno-octulosonate from D-ribulose 5-phosphate: step 2/3. It participates in bacterial outer membrane biogenesis; lipopolysaccharide biosynthesis. This chain is 2-dehydro-3-deoxyphosphooctonate aldolase, found in Coxiella burnetii (strain CbuK_Q154) (Coxiella burnetii (strain Q154)).